A 265-amino-acid chain; its full sequence is uncharacterized protein (265 aa).

This is an uncharacterized protein from Saccharolobus islandicus (Sulfolobus islandicus).